The sequence spans 491 residues: Glutamyl-tRNA(Gln) amidotransferase subunit A (491 aa).

Active-site charge relay system residues include lysine 76 and serine 154. Serine 178 (acyl-ester intermediate) is an active-site residue.

Belongs to the amidase family. GatA subfamily. Heterotrimer of A, B and C subunits.

The catalysed reaction is L-glutamyl-tRNA(Gln) + L-glutamine + ATP + H2O = L-glutaminyl-tRNA(Gln) + L-glutamate + ADP + phosphate + H(+). Its function is as follows. Allows the formation of correctly charged Gln-tRNA(Gln) through the transamidation of misacylated Glu-tRNA(Gln) in organisms which lack glutaminyl-tRNA synthetase. The reaction takes place in the presence of glutamine and ATP through an activated gamma-phospho-Glu-tRNA(Gln). The chain is Glutamyl-tRNA(Gln) amidotransferase subunit A from Cereibacter sphaeroides (strain ATCC 17029 / ATH 2.4.9) (Rhodobacter sphaeroides).